The chain runs to 275 residues: U6 snRNA phosphodiesterase 1 (275 aa).

Residues M1–N25 are disordered. H122 functions as the Proton acceptor in the catalytic mechanism. AMP is bound by residues H122 to S124, Y206, and N208 to S214. UMP contacts are provided by residues Y206 and E210 to S214. Catalysis depends on H212, which acts as the Proton donor.

It belongs to the 2H phosphoesterase superfamily. USB1 family.

The protein resides in the nucleus. The catalysed reaction is a 3'-end uridylyl-uridine-RNA = a 3'-end 2',3'-cyclophospho-uridine-RNA + uridine. 3'-5' RNA exonuclease that trims the 3' end of oligo(U) tracts of the pre-U6 small nuclear RNA (snRNA) molecule, leading to the formation of a mature U6 snRNA 3' end-terminated with a 2',3'-cyclic phosphate. Participates in the U6 snRNA 3' end processing that prevents U6 snRNA degradation. The polypeptide is U6 snRNA phosphodiesterase 1 (Dictyostelium discoideum (Social amoeba)).